A 266-amino-acid chain; its full sequence is Large ribosomal subunit protein uL2m (266 aa).

It belongs to the universal ribosomal protein uL2 family.

The protein localises to the mitochondrion. The polypeptide is Large ribosomal subunit protein uL2m (mrpl2) (Dictyostelium citrinum (Slime mold)).